Reading from the N-terminus, the 904-residue chain is Protein translocase subunit SecA (904 aa).

ATP-binding positions include Gln-87, 105-109, and Asp-512; that span reads GEGKT. A disordered region spans residues 851 to 904; sequence LAKQQQLSHESDNSALMSQEEANVAASLERKVGRNDPCPCGSGKKYKQCHGRLQ. Positions 853-871 are enriched in polar residues; it reads KQQQLSHESDNSALMSQEE. Residues Cys-888, Cys-890, Cys-899, and His-900 each contribute to the Zn(2+) site. Basic residues predominate over residues 894–904; sequence KKYKQCHGRLQ.

It belongs to the SecA family. As to quaternary structure, monomer and homodimer. Part of the essential Sec protein translocation apparatus which comprises SecA, SecYEG and auxiliary proteins SecDF-YajC and YidC. Requires Zn(2+) as cofactor.

It is found in the cell inner membrane. It localises to the cytoplasm. It carries out the reaction ATP + H2O + cellular proteinSide 1 = ADP + phosphate + cellular proteinSide 2.. Functionally, part of the Sec protein translocase complex. Interacts with the SecYEG preprotein conducting channel. Has a central role in coupling the hydrolysis of ATP to the transfer of proteins into and across the cell membrane, serving both as a receptor for the preprotein-SecB complex and as an ATP-driven molecular motor driving the stepwise translocation of polypeptide chains across the membrane. The chain is Protein translocase subunit SecA from Yersinia enterocolitica serotype O:8 / biotype 1B (strain NCTC 13174 / 8081).